The chain runs to 455 residues: tRNA modification GTPase MnmE (455 aa).

(6S)-5-formyl-5,6,7,8-tetrahydrofolate-binding residues include Arg24, Glu81, and Lys120. A TrmE-type G domain is found at 216-378 (GMTVVIAGRP…LREHLKACMG (163 aa)). Asn226 is a binding site for K(+). GTP-binding positions include 226–231 (NAGKSS), 245–251 (TDIAGTT), 270–273 (DTAG), 335–338 (NKAD), and 359–361 (SAR). Ser230 serves as a coordination point for Mg(2+). Positions 245, 247, and 250 each coordinate K(+). Residue Thr251 coordinates Mg(2+). Lys455 serves as a coordination point for (6S)-5-formyl-5,6,7,8-tetrahydrofolate.

Belongs to the TRAFAC class TrmE-Era-EngA-EngB-Septin-like GTPase superfamily. TrmE GTPase family. In terms of assembly, homodimer. Heterotetramer of two MnmE and two MnmG subunits. It depends on K(+) as a cofactor.

It localises to the cytoplasm. In terms of biological role, exhibits a very high intrinsic GTPase hydrolysis rate. Involved in the addition of a carboxymethylaminomethyl (cmnm) group at the wobble position (U34) of certain tRNAs, forming tRNA-cmnm(5)s(2)U34. The protein is tRNA modification GTPase MnmE of Pseudomonas aeruginosa (strain UCBPP-PA14).